Consider the following 397-residue polypeptide: Carnitine transport ATP-binding protein OpuCA (397 aa).

Residues Leu2–Ile236 form the ABC transporter domain. Gly35–Thr42 serves as a coordination point for ATP. 2 consecutive CBS domains span residues Met255–Val311 and Ile315–Leu373. The segment at Thr377 to Gly397 is disordered. A compositionally biased stretch (basic and acidic residues) spans Ala384–Gly397.

This sequence belongs to the ABC transporter superfamily. As to quaternary structure, the complex is composed of two ATP-binding proteins (OpuCA), two transmembrane proteins (OpuCB and OpuCD) and a solute-binding protein (OpuCC).

The enzyme catalyses a quaternary ammonium(out) + ATP + H2O = a quaternary ammonium(in) + ADP + phosphate + H(+). Its function is as follows. Part of the ABC transporter complex OpuCABCD involved in carnitine uptake. Probably responsible for energy coupling to the transport system. Involved, with BetL and GbuABC, in osmoprotection and cryoprotection of Listeria. Can also mediate weak glycine betaine transport. The sequence is that of Carnitine transport ATP-binding protein OpuCA (opuCA) from Listeria monocytogenes serotype 1/2a (strain 10403S).